Consider the following 484-residue polypeptide: UDP-N-acetylmuramoyl-L-alanyl-D-glutamate--L-lysine ligase (484 aa).

UDP-N-acetyl-alpha-D-muramoyl-L-alanyl-D-glutamate is bound at residue S43. ATP is bound at residue 119–125 (GTKGKTT). UDP-N-acetyl-alpha-D-muramoyl-L-alanyl-D-glutamate is bound by residues 161–162 (TT), S188, and R196. An N6-carboxylysine modification is found at K230. The L-lysine recognition motif signature appears at 405 to 408 (DDPN).

Belongs to the MurCDEF family. MurE subfamily. Post-translationally, carboxylation is probably crucial for Mg(2+) binding and, consequently, for the gamma-phosphate positioning of ATP.

The protein resides in the cytoplasm. The enzyme catalyses UDP-N-acetyl-alpha-D-muramoyl-L-alanyl-D-glutamate + L-lysine + ATP = UDP-N-acetyl-alpha-D-muramoyl-L-alanyl-gamma-D-glutamyl-L-lysine + ADP + phosphate + H(+). The protein operates within cell wall biogenesis; peptidoglycan biosynthesis. Functionally, catalyzes the addition of L-lysine to the nucleotide precursor UDP-N-acetylmuramoyl-L-alanyl-D-glutamate (UMAG) in the biosynthesis of bacterial cell-wall peptidoglycan. The polypeptide is UDP-N-acetylmuramoyl-L-alanyl-D-glutamate--L-lysine ligase (Streptococcus agalactiae serotype Ia (strain ATCC 27591 / A909 / CDC SS700)).